The sequence spans 151 residues: Deoxyuridine 5'-triphosphate nucleotidohydrolase (151 aa).

Substrate-binding positions include 70–72 (RSG), asparagine 83, 87–89 (LID), and methionine 97.

This sequence belongs to the dUTPase family. Homotrimer. Requires Mg(2+) as cofactor.

It carries out the reaction dUTP + H2O = dUMP + diphosphate + H(+). It functions in the pathway pyrimidine metabolism; dUMP biosynthesis; dUMP from dCTP (dUTP route): step 2/2. This enzyme is involved in nucleotide metabolism: it produces dUMP, the immediate precursor of thymidine nucleotides and it decreases the intracellular concentration of dUTP so that uracil cannot be incorporated into DNA. This is Deoxyuridine 5'-triphosphate nucleotidohydrolase from Escherichia fergusonii (strain ATCC 35469 / DSM 13698 / CCUG 18766 / IAM 14443 / JCM 21226 / LMG 7866 / NBRC 102419 / NCTC 12128 / CDC 0568-73).